We begin with the raw amino-acid sequence, 181 residues long: U1 small nuclear ribonucleoprotein C (181 aa).

The segment at 2–34 adopts a Matrin-type zinc-finger fold; it reads PKCDYCDVYLTHDSMSVRKAHNSGRNHLRNVVD. 2 stretches are compositionally biased toward pro residues: residues 129 to 143 and 150 to 174; these read PGMP…PGGL and PIPP…PPPG. The segment at 129–181 is disordered; the sequence is PGMPAGMPFPPPGGLPPNFQFPIPPPGGFPGMPPPGQGFPGMPPPGGNHDERR.

This sequence belongs to the U1 small nuclear ribonucleoprotein C family. In terms of assembly, U1 snRNP is composed of the 7 core Sm proteins B/B', D1, D2, D3, E, F and G that assemble in a heptameric protein ring on the Sm site of the small nuclear RNA to form the core snRNP, and at least 3 U1 snRNP-specific proteins U1-70K, U1-A and U1-C. U1-C interacts with U1 snRNA and the 5' splice-site region of the pre-mRNA.

The protein localises to the nucleus. Component of the spliceosomal U1 snRNP, which is essential for recognition of the pre-mRNA 5' splice-site and the subsequent assembly of the spliceosome. U1-C is directly involved in initial 5' splice-site recognition for both constitutive and regulated alternative splicing. The interaction with the 5' splice-site seems to precede base-pairing between the pre-mRNA and the U1 snRNA. Stimulates commitment or early (E) complex formation by stabilizing the base pairing of the 5' end of the U1 snRNA and the 5' splice-site region. This is U1 small nuclear ribonucleoprotein C from Sclerotinia sclerotiorum (strain ATCC 18683 / 1980 / Ss-1) (White mold).